The primary structure comprises 315 residues: piRNA biogenesis protein EXD1 (315 aa).

The 3'-5' exonuclease domain maps to 141–228 (IYIFDIQVMQ…ECLTNYLGLQ (88 aa)).

The protein belongs to the EXD1 family. As to quaternary structure, homodimer. Component of the PET complex, at least composed of EXD1, SIWI, TDRD12 and piRNAs.

The protein resides in the cytoplasm. In terms of biological role, RNA-binding component of the PET complex, a multiprotein complex required for the processing of piRNAs during spermatogenesis. The piRNA metabolic process mediates the repression of transposable elements during meiosis by forming complexes composed of piRNAs and Piwi proteins and governs the methylation and subsequent repression of transposable elements, preventing their mobilization, which is essential for the germline integrity. The PET complex is required during the secondary piRNAs metabolic process for the PIWIL2 slicing-triggered loading of PIWIL4 piRNAs. In the PET complex, EXD1 probably acts as an RNA adapter. EXD1 is an inactive exonuclease. The protein is piRNA biogenesis protein EXD1 of Bombyx mori (Silk moth).